The chain runs to 2145 residues: Glutamate synthase [NADH] (2145 aa).

The propeptide occupies 1 to 53 (MPVLKSDNFDPLEEAYEGGTIQNYNDEHHLHKSWANVIPDKRGLYDPDYEHDA). The For GATase activity role is filled by Cys-54. Positions 54–455 (CGVGFVANKH…PGDLFLVDTQ (402 aa)) constitute a Glutamine amidotransferase type-2 domain. 1132–1189 (LAETHQTLVLNDLRRNVVVQTDGQLRTGFDIAVAVLLGAESFTLATVPLIAMGCVMLR) is an FMN binding site. [3Fe-4S] cluster is bound by residues Cys-1185, Cys-1191, and Cys-1196. A coiled-coil region spans residues 1551 to 1600 (KKVLLKEKAEAAKAKAKATSEYLKKFRSNQEVDDEVNTLLIANQKAKEQE). 1928-1942 (GGGDTGNDCLGTSVR) contacts NAD(+). Thr-2070 bears the Phosphothreonine mark.

Belongs to the glutamate synthase family. In terms of assembly, homotrimer. It depends on [3Fe-4S] cluster as a cofactor. FAD is required as a cofactor. Requires FMN as cofactor.

It carries out the reaction 2 L-glutamate + NAD(+) = L-glutamine + 2-oxoglutarate + NADH + H(+). It participates in amino-acid biosynthesis; L-glutamate biosynthesis via GLT pathway; L-glutamate from 2-oxoglutarate and L-glutamine (NAD(+) route): step 1/1. Its pathway is energy metabolism; nitrogen metabolism. Inhibited by homocysteine sulfonamide. Its function is as follows. Forms L-glutamate from L-glutamine and 2-oxoglutarate. Represents an alternative pathway to L-glutamate dehydrogenase for the biosynthesis of L-glutamate. Participates with glutamine synthetase in ammonia assimilation processes. The enzyme is specific for NADH, L-glutamine and 2-oxoglutarate. The polypeptide is Glutamate synthase [NADH] (GLT1) (Saccharomyces cerevisiae (strain ATCC 204508 / S288c) (Baker's yeast)).